The sequence spans 105 residues: Flowering-promoting factor 1-like protein 5 (105 aa).

It belongs to the FPF1 family.

This Oryza sativa subsp. japonica (Rice) protein is Flowering-promoting factor 1-like protein 5.